The primary structure comprises 248 residues: MLIIPAIDLKDGQCVRLKQGIMEDATVFSETPETVALHWLDNGARQLHLVDLNGAFAGKPKNGEAIRAIVEAIDGRIPIQLGGGIRDLETVEYYLDNGISYVIIGTAAVKIPGFLHDACYAFPGQIMVGLDAKGGKVAVDGWSKVTGHDVIDLAKKFQDYGVEAIIHTDIGRDGMLNGLNIEATVELAQALTIPVIASGGVTNLDDIRKLCQVQSEGITGVITGRAIYQGSLDFKEAQALADQLDSAK.

Catalysis depends on Asp-8, which acts as the Proton acceptor. The Proton donor role is filled by Asp-131.

The protein belongs to the HisA/HisF family.

It localises to the cytoplasm. It carries out the reaction 1-(5-phospho-beta-D-ribosyl)-5-[(5-phospho-beta-D-ribosylamino)methylideneamino]imidazole-4-carboxamide = 5-[(5-phospho-1-deoxy-D-ribulos-1-ylimino)methylamino]-1-(5-phospho-beta-D-ribosyl)imidazole-4-carboxamide. It functions in the pathway amino-acid biosynthesis; L-histidine biosynthesis; L-histidine from 5-phospho-alpha-D-ribose 1-diphosphate: step 4/9. The sequence is that of 1-(5-phosphoribosyl)-5-[(5-phosphoribosylamino)methylideneamino] imidazole-4-carboxamide isomerase from Nitrosomonas eutropha (strain DSM 101675 / C91 / Nm57).